Here is a 494-residue protein sequence, read N- to C-terminus: Protein translocase subunit SecD (494 aa).

Helical transmembrane passes span 7–27, 322–342, 345–365, 372–392, 420–440, and 441–461; these read WFAL…NLPF, LIAA…FYRL, FIAI…YALI, PGVA…VLIF, IIDG…LGTG, and FVKG…FTAL.

This sequence belongs to the SecD/SecF family. SecD subfamily. Forms a complex with SecF. Part of the essential Sec protein translocation apparatus which comprises SecA, SecYEG and auxiliary proteins SecDF. Other proteins may also be involved.

The protein resides in the cell inner membrane. Part of the Sec protein translocase complex. Interacts with the SecYEG preprotein conducting channel. SecDF uses the proton motive force (PMF) to complete protein translocation after the ATP-dependent function of SecA. Its function is as follows. Probably participates in protein translocation into and across both the cytoplasmic and thylakoid membranes in cyanobacterial cells. This Prochlorococcus marinus (strain SARG / CCMP1375 / SS120) protein is Protein translocase subunit SecD.